The following is a 224-amino-acid chain: Adenylate kinase (224 aa).

Position 10–15 (10–15 (GSGKGT)) interacts with ATP. The tract at residues 30 to 59 (ESGAIFRENISKGTELGAKAKEYIDRGDLV) is NMP. Residues serine 31, arginine 36, 57 to 59 (DLV), 85 to 88 (GFPR), and glutamine 92 each bind AMP. The tract at residues 126–165 (GRRLCVNDNNHPNNIFIDAIKPDGDKCRVCGGELKTRSDD) is LID. Arginine 127 contributes to the ATP binding site. Residues arginine 162 and arginine 174 each coordinate AMP. Proline 211 contributes to the ATP binding site.

Belongs to the adenylate kinase family. As to quaternary structure, monomer.

It localises to the cytoplasm. It carries out the reaction AMP + ATP = 2 ADP. Its pathway is purine metabolism; AMP biosynthesis via salvage pathway; AMP from ADP: step 1/1. Functionally, catalyzes the reversible transfer of the terminal phosphate group between ATP and AMP. Plays an important role in cellular energy homeostasis and in adenine nucleotide metabolism. The chain is Adenylate kinase from Desulfosudis oleivorans (strain DSM 6200 / JCM 39069 / Hxd3) (Desulfococcus oleovorans).